The primary structure comprises 207 residues: N-(5'-phosphoribosyl)anthranilate isomerase (207 aa).

It belongs to the TrpF family.

It catalyses the reaction N-(5-phospho-beta-D-ribosyl)anthranilate = 1-(2-carboxyphenylamino)-1-deoxy-D-ribulose 5-phosphate. The protein operates within amino-acid biosynthesis; L-tryptophan biosynthesis; L-tryptophan from chorismate: step 3/5. The protein is N-(5'-phosphoribosyl)anthranilate isomerase of Legionella pneumophila subsp. pneumophila (strain Philadelphia 1 / ATCC 33152 / DSM 7513).